We begin with the raw amino-acid sequence, 38 residues long: Photosystem II reaction center protein X (38 aa).

A helical transmembrane segment spans residues 8–28 (FLWSLVAGAVVLGALFGAIIF).

This sequence belongs to the PsbX family. Type 1 subfamily. As to quaternary structure, PSII is composed of 1 copy each of membrane proteins PsbA, PsbB, PsbC, PsbD, PsbE, PsbF, PsbH, PsbI, PsbJ, PsbK, PsbL, PsbM, PsbT, PsbX, PsbY, PsbZ, Psb30/Ycf12, peripheral proteins PsbO, CyanoQ (PsbQ), PsbU, PsbV and a large number of cofactors. It forms dimeric complexes.

It is found in the cellular thylakoid membrane. In terms of biological role, involved in the binding and/or turnover of quinones at the Q(B) site of photosystem II (PSII). PSII is a light-driven water plastoquinone oxidoreductase, using light energy to abstract electrons from H(2)O, generating a proton gradient subsequently used for ATP formation. The protein is Photosystem II reaction center protein X of Synechococcus sp. (strain JA-2-3B'a(2-13)) (Cyanobacteria bacterium Yellowstone B-Prime).